The sequence spans 86 residues: UPF0297 protein SH1302 (86 aa).

This sequence belongs to the UPF0297 family.

This chain is UPF0297 protein SH1302, found in Staphylococcus haemolyticus (strain JCSC1435).